Here is a 234-residue protein sequence, read N- to C-terminus: Thymidylate kinase (234 aa).

21–28 lines the ATP pocket; that stretch reads GGEGTGKS.

It belongs to the thymidylate kinase family.

The catalysed reaction is dTMP + ATP = dTDP + ADP. Phosphorylation of dTMP to form dTDP in both de novo and salvage pathways of dTTP synthesis. This is Thymidylate kinase from Rhizobium meliloti (strain 1021) (Ensifer meliloti).